A 314-amino-acid polypeptide reads, in one-letter code: tRNA pseudouridine synthase B (314 aa).

A substrate-binding site is contributed by His-43. Asp-48 functions as the Nucleophile in the catalytic mechanism. Tyr-76, Tyr-179, and Leu-200 together coordinate substrate.

It belongs to the pseudouridine synthase TruB family. Type 1 subfamily.

The enzyme catalyses uridine(55) in tRNA = pseudouridine(55) in tRNA. In terms of biological role, responsible for synthesis of pseudouridine from uracil-55 in the psi GC loop of transfer RNAs. This Shigella dysenteriae serotype 1 (strain Sd197) protein is tRNA pseudouridine synthase B.